Consider the following 591-residue polypeptide: L-fucose isomerase (591 aa).

Catalysis depends on proton acceptor residues E337 and D361. 3 residues coordinate Mn(2+): E337, D361, and H528.

The protein belongs to the L-fucose isomerase family. In terms of assembly, homohexamer. Requires Mn(2+) as cofactor.

Its subcellular location is the cytoplasm. It carries out the reaction L-fucose = L-fuculose. It functions in the pathway carbohydrate degradation; L-fucose degradation; L-lactaldehyde and glycerone phosphate from L-fucose: step 1/3. Converts the aldose L-fucose into the corresponding ketose L-fuculose. This chain is L-fucose isomerase, found in Salmonella heidelberg (strain SL476).